A 277-amino-acid polypeptide reads, in one-letter code: Phosphate import ATP-binding protein PstB (277 aa).

One can recognise an ABC transporter domain in the interval 31-272 (IEVPGLSLFY…PAKKQTEDYI (242 aa)). 63-70 (GPSGCGKS) is a binding site for ATP.

Belongs to the ABC transporter superfamily. Phosphate importer (TC 3.A.1.7) family. As to quaternary structure, the complex is composed of two ATP-binding proteins (PstB), two transmembrane proteins (PstC and PstA) and a solute-binding protein (PstS).

It localises to the cell inner membrane. It catalyses the reaction phosphate(out) + ATP + H2O = ADP + 2 phosphate(in) + H(+). Functionally, part of the ABC transporter complex PstSACB involved in phosphate import. Responsible for energy coupling to the transport system. The protein is Phosphate import ATP-binding protein PstB of Pseudomonas putida (Arthrobacter siderocapsulatus).